The primary structure comprises 376 residues: UDP-N-acetylglucosamine--N-acetylmuramyl-(pentapeptide) pyrophosphoryl-undecaprenol N-acetylglucosamine transferase (376 aa).

UDP-N-acetyl-alpha-D-glucosamine-binding positions include 12-14, Asn-126, Arg-163, Ser-198, and Gln-296; that span reads TAG.

The protein belongs to the glycosyltransferase 28 family. MurG subfamily.

It localises to the cell membrane. The catalysed reaction is di-trans,octa-cis-undecaprenyl diphospho-N-acetyl-alpha-D-muramoyl-L-alanyl-D-glutamyl-meso-2,6-diaminopimeloyl-D-alanyl-D-alanine + UDP-N-acetyl-alpha-D-glucosamine = di-trans,octa-cis-undecaprenyl diphospho-[N-acetyl-alpha-D-glucosaminyl-(1-&gt;4)]-N-acetyl-alpha-D-muramoyl-L-alanyl-D-glutamyl-meso-2,6-diaminopimeloyl-D-alanyl-D-alanine + UDP + H(+). It participates in cell wall biogenesis; peptidoglycan biosynthesis. Its function is as follows. Cell wall formation. Catalyzes the transfer of a GlcNAc subunit on undecaprenyl-pyrophosphoryl-MurNAc-pentapeptide (lipid intermediate I) to form undecaprenyl-pyrophosphoryl-MurNAc-(pentapeptide)GlcNAc (lipid intermediate II). In Frankia casuarinae (strain DSM 45818 / CECT 9043 / HFP020203 / CcI3), this protein is UDP-N-acetylglucosamine--N-acetylmuramyl-(pentapeptide) pyrophosphoryl-undecaprenol N-acetylglucosamine transferase.